Here is a 309-residue protein sequence, read N- to C-terminus: MSHQLPDIQASRPDVTVGLSQVGVTDVDKLVKIERDGETPLVLMAEFEVFVDLPSGRKGIDMSRNMQVIDETLEAAVSGSVSRVEDMCGDVAERLLEKHEYTTTATVEMTADLVMHEDTPASELPTQNTISILASATATDEGTREEIGAEVIGMTVCPCSQGMSASRARDVMHDLDIEDETIETFLEQVPQPGHSQRGHATLTVTADGSPDVDLIELADIARDAMSARIYNLAKRPDEDYMTYHAHADAKFVEDCVRSMAEQVVNSFEHLDDDAVVRMKQSNDESIHQHNAHAEREVTLEQLRAEVSAS.

Belongs to the GTP cyclohydrolase IV family. In terms of assembly, homodimer. Requires Fe(2+) as cofactor.

It carries out the reaction GTP + H2O = 7,8-dihydroneopterin 2',3'-cyclic phosphate + formate + diphosphate + H(+). It functions in the pathway cofactor biosynthesis; 5,6,7,8-tetrahydromethanopterin biosynthesis. Converts GTP to 7,8-dihydro-D-neopterin 2',3'-cyclic phosphate, the first intermediate in the biosynthesis of coenzyme methanopterin. This is GTP cyclohydrolase MptA from Haloquadratum walsbyi (strain DSM 16790 / HBSQ001).